A 964-amino-acid chain; its full sequence is Cycloisomaltooligosaccharide glucanotransferase (964 aa).

Residues 1–30 (MRVKILPLVFMTLLLIVPSQMLLPSGQANA) form the signal peptide. CBM6 domains are found at residues 413–538 (DRYE…LTLG) and 740–863 (NMYE…LKLD).

Belongs to the glycosyl hydrolase 66 family.

The catalysed reaction is cyclizes part of a (1-&gt;6)-alpha-D-glucan chain by formation of a (1-&gt;6)-alpha-D-glucosidic bond.. In terms of biological role, produces cycloisomaltooligosaccharide from dextran. This Niallia circulans (Bacillus circulans) protein is Cycloisomaltooligosaccharide glucanotransferase (cit).